The primary structure comprises 340 residues: NADH-quinone oxidoreductase subunit H 2 (340 aa).

Helical transmembrane passes span 10–30, 84–104, 126–146, 172–192, 198–218, 255–275, 279–299, and 318–338; these read LIVA…ILLL, FLFK…FVAI, VALL…IFGG, MGFA…LDIV, VWNI…GLAE, VIVL…WNGI, MPPL…FIWF, and VLLP…GAAA.

It belongs to the complex I subunit 1 family. In terms of assembly, NDH-1 is composed of 14 different subunits. Subunits NuoA, H, J, K, L, M, N constitute the membrane sector of the complex.

The protein resides in the cell inner membrane. It catalyses the reaction a quinone + NADH + 5 H(+)(in) = a quinol + NAD(+) + 4 H(+)(out). Functionally, NDH-1 shuttles electrons from NADH, via FMN and iron-sulfur (Fe-S) centers, to quinones in the respiratory chain. The immediate electron acceptor for the enzyme in this species is believed to be ubiquinone. Couples the redox reaction to proton translocation (for every two electrons transferred, four hydrogen ions are translocated across the cytoplasmic membrane), and thus conserves the redox energy in a proton gradient. This subunit may bind ubiquinone. The polypeptide is NADH-quinone oxidoreductase subunit H 2 (Rhizobium etli (strain ATCC 51251 / DSM 11541 / JCM 21823 / NBRC 15573 / CFN 42)).